The primary structure comprises 424 residues: Chloroquine resistance transporter (424 aa).

Residues M1–N58 lie on the Cytoplasmic side of the membrane. The chain crosses the membrane as a helical span at residues I59–A79. At K80–S90 the chain is on the vacuolar side. The N-linked (GlcNAc...) asparagine glycan is linked to N88. Residues F91–L111 traverse the membrane as a helical segment. The Cytoplasmic portion of the chain corresponds to F112–N127. A helical transmembrane segment spans residues L128 to L148. Residues T149–N154 are Vacuolar-facing. A helical transmembrane segment spans residues I155–L175. At R176 to R178 the chain is on the cytoplasmic side. A helical transmembrane segment spans residues Y179–M199. The Vacuolar segment spans residues K200–N209. Residues S210–T230 form a helical membrane-spanning segment. Residues R231–M248 are Cytoplasmic-facing. A helical transmembrane segment spans residues V249–L269. The Vacuolar portion of the chain corresponds to K270–K317. Intrachain disulfides connect C289–C312 and C301–C309. The helical transmembrane segment at T318–D338 threads the bilayer. Over K339–T346 the chain is Cytoplasmic. A helical membrane pass occupies residues I347 to G367. The Vacuolar segment spans residues D368 to D377. A helical transmembrane segment spans residues F378–L398. The Cytoplasmic segment spans residues E399–Q424.

It belongs to the CRT-like transporter family. Monomer.

It localises to the vacuole membrane. The enzyme catalyses L-arginine(in) = L-arginine(out). It catalyses the reaction L-lysine(in) = L-lysine(out). The catalysed reaction is L-histidine(out) = L-histidine(in). It carries out the reaction histamine(out) = histamine(in). The enzyme catalyses spermidine(in) = spermidine(out). It catalyses the reaction Fe(3+)(in) = Fe(3+)(out). The catalysed reaction is Fe(2+)(in) = Fe(2+)(out). Its activity is regulated as follows. Transporter activity is trans-stimulated by host-derived peptides containing 4-11 amino acids. Trans-stimulation by hemoglobin-derived peptide VDPVNF is pH-dependent and sodium-independent. Saquinavir trans-stimulates transport of hemoglobin-derived peptide VDPVNF. Protons are non-competitive inhibitors of chloroquine transport. Its function is as follows. Nutrient transporter. Substrate transport is pH-dependent. Can transport arginine, lysine, histidine, peptides, histamine and spermidine. May modulate activity of endogenous transporters. Involved in maintaining the osmotic homeostasis of the digestive vacuole. Required for the asexual intraerythrocytic proliferation of parasites. Can transport Fe(2+) and Fe(3+). The polypeptide is Chloroquine resistance transporter (Plasmodium falciparum).